A 415-amino-acid polypeptide reads, in one-letter code: Cell division control protein 11 (415 aa).

Ser-2 carries the N-acetylserine modification. Ser-2 carries the phosphoserine modification. A Basic motif motif is present at residues 12–19 (RKRKHLKR). The region spanning 19–298 (RGITFTVMIV…ERYRTEALSG (280 aa)) is the Septin-type G domain. The G1 motif stretch occupies residues 29–36 (GQSGSGRS). GTP-binding positions include 29–36 (GQSGSGRS), Gly-92, 172–180 (KSDSLTRDE), Gly-230, and Arg-247. Positions 89–92 (DTPG) are G3 motif. The interval 171–174 (SKSD) is G4 motif. Ser-305 carries the post-translational modification Phosphoserine. The interval 307 to 360 (RPNLTKLNGSSSSSTTTRRNTNPFKQSNNINNDVLNPASDMHGQSTGENNETYM) is disordered. The span at 316-328 (SSSSSTTTRRNTN) shows a compositional bias: low complexity. Thr-327 is subject to Phosphothreonine. Composition is skewed to polar residues over residues 329-340 (PFKQSNNINNDV) and 348-359 (HGQSTGENNETY). The stretch at 354 to 414 (ENNETYMTRE…LEKEAKIKQE (61 aa)) forms a coiled coil. Lys-412 is covalently cross-linked (Glycyl lysine isopeptide (Lys-Gly) (interchain with G-Cter in SUMO)).

This sequence belongs to the TRAFAC class TrmE-Era-EngA-EngB-Septin-like GTPase superfamily. Septin GTPase family. In terms of assembly, component of the septin complex which consists of CDC3, CDC10, CDC11, CDC12 and probably SHS1 and rearranges to a cortical collar of highly ordered filaments at the mother-bud-neck. A complex formed by CDC3, CDC10, CDC11 and CDC12 is capable of forming long filaments in vitro and the components seem to be present in a 2:2:2:2 arrangement in vivo. The filaments are proposed to be formed by the end-to-end polymerization of CDC3-CDC12-CDC11 complexes with CDC10 serving as a bridge to bundle the polymers into paired filaments. Component of the GIN4 complex composed of at least BNI5, CDC3, CDC10, CDC11, CDC12, GIN4, NAP1 and SHS1. Self-associates. Interacts with BEM4, KCC4, SPR28 and SYP1. Interacts with BNI5. Post-translationally, sumoylated during mitosis on the mother cell side of the bud neck. Sumoylation probably plays a central role in regulating septin ring disassembly during the cell cycle.

The protein localises to the membrane. The protein resides in the bud neck. Functionally, septins are GTPases involved in cytokinesis that assemble early in the cell cycle as a patch at the incipient bud site and form a ring approximate 15 minutes before bud emergence, which transforms into an hour-glass shaped collar of cortical filaments that spans both sides of the mother-bud neck. This collar persists until just before cytokinesis, when it splits into two rings that occupy opposite sides of the neck. The septins at the bud neck serve as a structural scaffold that recruits different components involved in diverse processes at specific stages during the cell cycle. Many proteins bind asymmetrically to the septin collar. The septin assembly is regulated by protein kinases GIN4 and/or CLA4. May act by recruiting MYO1 and HOF1, a protein involved in septation, to the site of cleavage. Septins are also involved in cell morphogenesis, bud site selection, chitin deposition, cell cycle regulation, cell compartmentalization and spore wall formation. CDCd11 with SHS1 11 are involved in the recruitment of BNI5 and thereby ensure efficient localization at the bud neck of MYO1, the type II myosin of the actomyosin contractile ring. The sequence is that of Cell division control protein 11 from Saccharomyces cerevisiae (strain ATCC 204508 / S288c) (Baker's yeast).